The chain runs to 403 residues: Histidine decarboxylase (403 aa).

His120 is a binding site for substrate. Lys233 is subject to N6-(pyridoxal phosphate)lysine.

This sequence belongs to the group II decarboxylase family. In terms of assembly, homotetramer. Pyridoxal 5'-phosphate is required as a cofactor.

The enzyme catalyses L-histidine + H(+) = histamine + CO2. This Pseudomonas entomophila (strain L48) protein is Histidine decarboxylase.